Reading from the N-terminus, the 284-residue chain is Tropomyosin Pen a 1.0102 (284 aa).

Positions 1-51 (MDAIKKKMQAMKLEKDNAMDRADTLEQQNKEANNRAEKSEEEVHNLQKRMQ) are disordered. The stretch at 1–273 (MDAIKKKMQA…KEKYKSITDE (273 aa)) forms a coiled coil. Over residues 12–45 (KLEKDNAMDRADTLEQQNKEANNRAEKSEEEVHN) the composition is skewed to basic and acidic residues. IgE-binding stretches follow at residues 43–57 (VHNLQKRMQQLENDL), 85–105 (VAALNRRIQLLEEDLERSEER), 133–153 (RSLSDEERMDALENQLKEARF), 187–202 (ESKIVELEEELRVVGN), 247–284 (QKLQKEVDRLEDELVNEKEKYKSITDELDQTFSELSGY), 249–260 (LQKEVDRLEDEL), and 266–281 (KYKSITDELDQTFSEL).

It belongs to the tropomyosin family. As to quaternary structure, homodimer.

Functionally, tropomyosin, in association with the troponin complex, plays a central role in the calcium dependent regulation of muscle contraction. This is Tropomyosin Pen a 1.0102 from Penaeus aztecus (Brown shrimp).